The following is a 319-amino-acid chain: HPr kinase/phosphorylase (319 aa).

Catalysis depends on residues histidine 146 and lysine 167. Residue 161–168 (GESGLGKS) coordinates ATP. Serine 168 provides a ligand contact to Mg(2+). The active-site Proton acceptor; for phosphorylation activity. Proton donor; for dephosphorylation activity is aspartate 185. Residues 209–218 (LEVRGIGLLD) form an important for the catalytic mechanism of both phosphorylation and dephosphorylation region. Glutamate 210 is a binding site for Mg(2+). Residue arginine 252 is part of the active site. Residues 273 to 278 (QVVAGR) form an important for the catalytic mechanism of dephosphorylation region.

Belongs to the HPrK/P family. In terms of assembly, homohexamer. Mg(2+) is required as a cofactor.

The catalysed reaction is [HPr protein]-L-serine + ATP = [HPr protein]-O-phospho-L-serine + ADP + H(+). It catalyses the reaction [HPr protein]-O-phospho-L-serine + phosphate + H(+) = [HPr protein]-L-serine + diphosphate. Its function is as follows. Catalyzes the ATP- as well as the pyrophosphate-dependent phosphorylation of a specific serine residue in HPr, a phosphocarrier protein of the phosphoenolpyruvate-dependent sugar phosphotransferase system (PTS). HprK/P also catalyzes the pyrophosphate-producing, inorganic phosphate-dependent dephosphorylation (phosphorolysis) of seryl-phosphorylated HPr (P-Ser-HPr). The sequence is that of HPr kinase/phosphorylase from Variovorax paradoxus (strain S110).